The following is a 130-amino-acid chain: Gonadotropin subunit beta-1 (130 aa).

The first 18 residues, 1–18, serve as a signal peptide directing secretion; that stretch reads MRMRFVVMVILLPALMMS. Cystine bridges form between C26–C74, C40–C89, C51–C105, C55–C107, and C110–C117. An N-linked (GlcNAc...) asparagine glycan is attached at N30.

This sequence belongs to the glycoprotein hormones subunit beta family. Heterodimer of an alpha and a beta chain.

The protein localises to the secreted. Its function is as follows. Involved in gametogenesis and steroidogenesis. This chain is Gonadotropin subunit beta-1 (cgba), found in Carassius auratus (Goldfish).